A 93-amino-acid chain; its full sequence is Small ribosomal subunit protein uS19 (93 aa).

The protein belongs to the universal ribosomal protein uS19 family.

Functionally, protein S19 forms a complex with S13 that binds strongly to the 16S ribosomal RNA. The protein is Small ribosomal subunit protein uS19 (rpsS) of Helicobacter pylori (strain ATCC 700392 / 26695) (Campylobacter pylori).